Reading from the N-terminus, the 2278-residue chain is MASKPFYPIEFNPSVELQVLRSAHLRVGGREQMFETINDLNDHVRGVVAKLWCKHLHRSLAAAPTFTEEGLLDSFLSKPPVDINPDTTFRELFGINPHEQFPLSIHDLAKLQGELVDAARNPGHVLRRHYSTDSLTALINKITKFVPVHATLQEMQARRAFERERAELFRELPHADLDVSRQQKSYFYAMWRQVVKKSKEFFIPLVKCTSWRKKFTEPAEIVRQVLVHFCEGMRSQFSTNANYINLSLIAKLRPTVLTMILQQHKNTYRGWLATVTALVEVYSNLFQDMRDTAVSAVSAITLVFETIKDFVVNVIDLVKSTFQSQGPTSCGWAAIIAGALLILMKLSGCSNTTSYWHRLLKVCGGVTTIAAAARAVVWVRDIIAEADGKARLKKYMARTAALLELAASRDVTGTDELKRLLDCFTQLIEEGTELIQEFGTSPLAGLTRSYVSELESTANSIRSTILLDTPRKTPVAIILTGPPGIGKTRLAQHLAAGFGKVSNFSVTLDHHDSYTGNEVAIWDEFDVDTQGKFVETMIGVVNTAPYPLNCDRVENKGKVFTSDYIICTSNYPTSVLPDNPRAGAFYRRVTTIDVSSPTIEDWKKKNPGKKPPPDLYKNDFTHLRLSVRPFLGYNPEGDTLDGVRVKPVLTSVDGLSRLMETKFKEQGNEHRNLWITCPRDLVAPAASGLKAYMAANRALAQVFQEPSSQDIGETCTSRVYVSCNNPPPTYSGRVVKITAINPWDASLANSMLSMFETTSHIPASIQREIMYRVWDPLVHLQTREPNTQMLPYINRVVPVSSAFDFIRGLRHHLGLCSVKGMWRAYQGWNSSSSILEFLSKHMADVAFPHNPECTVFRAPDGDVIFYTFGSYACFVSPARVPFVGEPPKNVHSNITRNMTWAETLRLLAETITESLVHFGPFLLMMHNVSYLATRSGREEEAKGKTKHGRGAKHARRGGVSLSDDEYDEWRDLVRDWRQDMTVGEFVELRERYALGMDSEDVQRYRAWLELRAMRMGAGAYQHATIIGRGGVQDTIIRTQPMRAPRAPRNQGYDEEAPTPIVTFTSGGDHIGYGCHMGNGVVVTVTHVASASDQVEGQDFAIRKTEGETTWVNTNLGHLPHYQIGDGAPVYYSARLHPVTTLAEGTYETPNITVQGYHLRIINGYPTKRGDCGTPYFDSCRRLVGLHAATSTNGETKLAQRVTKTSKVENAFAWKGLPVVRGPDCGGMPTGTRYHRSPAWPNPVEGETHAPAPFGSGDERYKFSQVEMLVNGLKPYSEPTPGIPPALLQRAATHTRTYLETIIGTHRSPNLSFSEACSLLEKSTSCGPFVAGQKGDYWDEDKQCYTGVLAEHLAKAWDAANRGVAPQNAYKLALKDELRPIEKNAQGKRRLLWGCDAGATLVATAAFKGVATRLQAVAPMTPVSVGINMDSYQVEVLNESLKGGVLYCLDYSKWDSTQHPAVTAASLGILERLSEATPITTSAVELLSSPARGHLNDIVFITKSGLPSGMPFTSVINSLNHMTYFAAAVLKAYEQHGAPYTGNVFQVETVHTYGDDCLYSVCPATASIFQTVLANLTSFGLKPTAADKSETIAPTHTPVFLKRTLTCTPRGVRGLLDITSIKRQFLWIKANRTVDINSPPAYDRDARGIQLENALAYASQHGHAVFEEVAELARHTAKAEGLVLTNVNYDQALATYESWFIGGTGLVQGSPSEETTKLVFEMEGLGQPQPQGGEKTSPQPVTPQDTIGPTAALLLPTQIETPNASAQRLELAMATGAVTSNVPNCIRECFASVTTIPWTTRQAANTFLGAIHLGPRINPYTAHLSAMFAGWGGGFQVRVTISGSGLFAGRAVTAILPPGVNPASVQNPGVFPHAFIDARTTEPILINLPDIRPVDFHRVDGDDATASVGLWVAQPLINPFQTGPVSTCWLSFETRPGPDFDFCLLKAPEQQMDNGISPASLLPRRLGRSRGNRMGGRIVGLVVVAAAEQVNHHFDARSTTLGWSTLPVEPIAGDISWYGDAGNKSIRGLVSAQGKGIIFPNIVNHWTDVALSSKTSNTTTIPTDTSTLGNLPGASGPLVTFADNGDVNESSAQNAILTAANQNFTSFSPTFDAAGIWVWMPWATDRPGASDSNIYISPTWVNGNPSHPIHEKCTNMIGTNFQFGGTGTNNIMLWQEQHFTSWPGAAEVYCSQLESTAEIFQNNIVNIPMNQMAVFNVETAGNSFQIAILPNGYCVTNAPVGTHQLLDYETSFKFVGLFPQSTSLQGPHGNSGRAVRFLE.

Residues 454-609 (LESTANSIRS…EDWKKKNPGK (156 aa)) form the SF3 helicase domain. 481–488 (GPPGIGKT) contributes to the ATP binding site. The interval 939-958 (EEAKGKTKHGRGAKHARRGG) is disordered. Positions 944-956 (KTKHGRGAKHARR) are enriched in basic residues. Tyr-966 carries the post-translational modification O-(5'-phospho-RNA)-tyrosine. Residues 1056–1204 (APTPIVTFTS…TKLAQRVTKT (149 aa)) form the Peptidase C24 domain. Residues His-1086, Glu-1107, and Cys-1171 each act as for 3CLpro activity in the active site. The 126-residue stretch at 1443–1568 (GVLYCLDYSK…SVCPATASIF (126 aa)) folds into the RdRp catalytic domain.

In terms of assembly, homodimer. Homomultimer. Specific enzymatic cleavages in vivo yield mature proteins. Pro-Pol is first autocatalytically cleaved, then processes the whole polyprotein. In terms of processing, VPg is uridylylated by the polymerase and is covalently attached to the 5'-end of the polyadenylated genomic and subgenomic RNAs. This uridylylated form acts as a nucleotide-peptide primer for the polymerase.

It localises to the virion. Its subcellular location is the host cytoplasm. It carries out the reaction a ribonucleoside 5'-triphosphate + H2O = a ribonucleoside 5'-diphosphate + phosphate + H(+). The catalysed reaction is RNA(n) + a ribonucleoside 5'-triphosphate = RNA(n+1) + diphosphate. The enzyme catalyses Endopeptidase with a preference for cleavage when the P1 position is occupied by Glu-|-Xaa and the P1' position is occupied by Gly-|-Yaa.. Its function is as follows. Together with NTPase and NS4, initiates the formation of the replication complex. Induces the proliferation of the host smooth ER membranes forming long tubular structures. These remodeled membranes probably form the viral factories that contain the replication complex. In terms of biological role, displays NTPase activity, but no helicase activity. Induces the formation of convoluted membranes derived from the host ER. These remodeled membranes probably form the viral factories that contain the replication complex. Together with NS2 and NS4, initiates the formation of the replication complex. Functionally, probable key protein responsible for the formation of membrane alterations by the virus. Induces the formation of convoluted membranes derived from the host ER. These remodeled membranes probably form the viral factories that contain the replication complex. Together with NS2 and NTPase, initiates the formation of the replication complex. Viral genome-linked protein is covalently linked to the 5'-end of the positive-strand, negative-strand genomic RNAs and subgenomic RNA. Acts as a genome-linked replication primer. May recruit ribosome to viral RNA thereby promoting viral proteins translation. Interacts with host translation initiation complex to allow the translation of viral proteins. Its function is as follows. Protease-polymerase p76 processes the polyprotein: Pro-Pol is first released by autocleavage, then all other proteins are cleaved. Cleaves host translation initiation factor eIF4G1, eIF4G2 and PABP1 thereby inducing a shutdown of host protein synthesis. This shutdown may not prevent viral mRNA from being translated since viral Vpg replaces the cap. It is also an RNA-directed RNA polymerase which replicates genomic and antigenomic viral RNA by recognizing specific signals. Also transcribes a subgenomic mRNA by initiating RNA synthesis internally on antigenomic RNA. This sgRNA codes for structural proteins. Catalyzes the covalent attachment VPg with viral RNAs. In terms of biological role, capsid protein self assembles to form an icosahedral capsid with a T=3 symmetry, about 38 nm in diameter, and consisting of 180 capsid proteins. The capsid encapsulate the genomic RNA and VP2 proteins. Attaches virion to target cells, inducing endocytosis of the viral particle. Acidification of the endosome induces conformational change of capsid protein thereby injecting virus genomic RNA into host cytoplasm. In Homo sapiens (Human), this protein is Genome polyprotein.